A 435-amino-acid polypeptide reads, in one-letter code: GTPase Der (435 aa).

EngA-type G domains are found at residues 4 to 167 and 175 to 350; these read PVVA…GDKA and IRFS…ENQT. GTP contacts are provided by residues 10–17, 57–61, 119–122, 181–188, 228–232, and 293–296; these read GRPNVGKS, DTGGI, NKAD, DTAGI, and NKWD. In terms of domain architecture, KH-like spans 351 to 435; it reads RRIQSSVLND…PIKILARKRK (85 aa).

It belongs to the TRAFAC class TrmE-Era-EngA-EngB-Septin-like GTPase superfamily. EngA (Der) GTPase family. As to quaternary structure, associates with the 50S ribosomal subunit.

GTPase that plays an essential role in the late steps of ribosome biogenesis. The sequence is that of GTPase Der from Lactobacillus johnsonii (strain CNCM I-12250 / La1 / NCC 533).